The primary structure comprises 253 residues: Imidazole glycerol phosphate synthase subunit HisF (253 aa).

Active-site residues include aspartate 11 and aspartate 130.

Belongs to the HisA/HisF family. In terms of assembly, heterodimer of HisH and HisF.

It localises to the cytoplasm. It catalyses the reaction 5-[(5-phospho-1-deoxy-D-ribulos-1-ylimino)methylamino]-1-(5-phospho-beta-D-ribosyl)imidazole-4-carboxamide + L-glutamine = D-erythro-1-(imidazol-4-yl)glycerol 3-phosphate + 5-amino-1-(5-phospho-beta-D-ribosyl)imidazole-4-carboxamide + L-glutamate + H(+). The protein operates within amino-acid biosynthesis; L-histidine biosynthesis; L-histidine from 5-phospho-alpha-D-ribose 1-diphosphate: step 5/9. In terms of biological role, IGPS catalyzes the conversion of PRFAR and glutamine to IGP, AICAR and glutamate. The HisF subunit catalyzes the cyclization activity that produces IGP and AICAR from PRFAR using the ammonia provided by the HisH subunit. The chain is Imidazole glycerol phosphate synthase subunit HisF from Clostridium botulinum (strain Kyoto / Type A2).